We begin with the raw amino-acid sequence, 106 residues long: Large ribosomal subunit protein eL42 (106 aa).

It belongs to the eukaryotic ribosomal protein eL42 family.

It is found in the cytoplasm. In Trypanosoma brucei brucei, this protein is Large ribosomal subunit protein eL42 (RPL44).